Consider the following 455-residue polypeptide: Phosphoglucosamine mutase (455 aa).

The Phosphoserine intermediate role is filled by Ser104. Residues Ser104, Asp253, Asp255, and Asp257 each contribute to the Mg(2+) site. Residue Ser104 is modified to Phosphoserine.

It belongs to the phosphohexose mutase family. Mg(2+) is required as a cofactor. Post-translationally, activated by phosphorylation.

The enzyme catalyses alpha-D-glucosamine 1-phosphate = D-glucosamine 6-phosphate. In terms of biological role, catalyzes the conversion of glucosamine-6-phosphate to glucosamine-1-phosphate. In Psychrobacter arcticus (strain DSM 17307 / VKM B-2377 / 273-4), this protein is Phosphoglucosamine mutase.